The sequence spans 512 residues: Cytochrome P450 monooxygenase poxM (512 aa).

The helical transmembrane segment at 15 to 35 threads the bilayer; sequence LLKGATIALSFFSLYLFGLVI. Position 449 (Cys-449) interacts with heme.

It belongs to the cytochrome P450 family. Heme serves as cofactor.

It is found in the membrane. It participates in secondary metabolite biosynthesis. In terms of biological role, cytochrome P450 monooxygenase; part of the gene cluster that mediates the biosynthesis of oxaleimides, cytotoxic compounds containing an unusual disubstituted succinimide moiety. The first step of the pathway is provided by the HR-PKS poxF that serves in a new mode of collaborative biosynthesis with the PKS-NRPS poxE, by providing the olefin containing amino acid substrate via the synthesis of an ACP-bound dec-4-enoate. The cytochrome P450 monooxygenase poxM-catalyzed oxidation at the alpha-position creates the enzyme-bound 2-hydroxydec-4-enoyl-ACP thioester, which may be prone to spontaneous hydrolysis to yield 2-hydroxydec-4-enoic acid due to increased electrophilicity of the carbonyl. 2-hydroxydec-4-enoic acid can then be further oxidized by poxM to yield the alpha-ketoacid 2-oxodec-4-enoicacid, which is reductively aminated by the aminotransferase poxL to yield (S,E)-2-aminodec-4-enoic acid. The Hybrid PKS-NRPS synthetase poxE then performs condensation between the octaketide product of its PKS modules and the amino group of (S,E)-2-aminodec-4-enoic acid which is activated and incorporated by the adenylation domain. The resulting aminoacyl product can be cyclized by the Diels-Alderase PoxQ and reductively released by the reductive (R) domain of poxE to yield an aldehyde intermediate. The released aldehyde is then substrate for a Knoevenagel condensation by the hydrolyase poxO followed by an oxidation at the 5-position of the pyrrolidone ring. The presence of the olefin from the amino acid building block allows for migration of the substituted allyl group to occur. This allylic transposition reaction takes place in a conjugate addition, semipinacol-like fashion to yield a succinimide intermediate. Iterative two-electron oxidations of the C7 methyl of the succinimide intermediate to the carboxylic acid can be catalyzed by one of two remaining cytochrome P450 monooxygenasess poxC or poxD to yield oxaleimide A. Subsequent oxidation yields the maleimide scaffold oxaleimide I. Both oxaleimide A and oxaleimide I can undergo oxidative modifications in the decalin ring to yield the series of products oxaleimides B to H. The sequence is that of Cytochrome P450 monooxygenase poxM from Penicillium oxalicum (strain 114-2 / CGMCC 5302) (Penicillium decumbens).